The chain runs to 297 residues: MPTSPTMTSVPIARSPRPSYQQINQHQPSDSALGLVSTRSFPAIVGTADMMLKSSQVTLVGYEKIGSGYCTAVVRGKVADVRLAVEEGARTAEQFGQLVSKLVIPRPMPNLQAVFPIGSHLVELAQQQRGYSRLSNRSIGLLETRGFPAMVGAADAMLKSADVQLASYEIIGDGLCTAIVRGTVANVAMAIEVGMQEAERIGELHAVMIIPRLLEDLEHTLPVATYWLDENEPLPMLLPNQVREKQRQLVALPELEKAVVPQRQAKPLPLQEKTEAPLVLEKEAEKPIVEVLGPEID.

Residues 1–29 are disordered; sequence MPTSPTMTSVPIARSPRPSYQQINQHQPS. Over residues 18–29 the composition is skewed to polar residues; it reads PSYQQINQHQPS. BMC domains follow at residues 32–116 and 138–222; these read ALGL…AVFP and SIGL…HTLP.

Belongs to the bacterial microcompartments protein family. In terms of assembly, homooligomerizes, possibly as a trimer, interacts with CcmK in the carboxysome.

The protein localises to the carboxysome. In terms of biological role, required for formation of the carboxysome, a polyhedral inclusion where RuBisCO (ribulose bisphosphate carboxylase, rbcL-rbcS) is sequestered. Required for recruitment of major shell protein CcmK2 to the pre-carboxysome. Suggested to be a carboxysome shell protein. The polypeptide is Carboxysome assembly protein CcmO (Synechocystis sp. (strain ATCC 27184 / PCC 6803 / Kazusa)).